A 537-amino-acid chain; its full sequence is CTP synthase (537 aa).

Residues 1 to 267 (MTKYIFVTGG…DQIVLDHFDV (267 aa)) are amidoligase domain. Residue S13 coordinates CTP. Position 13 (S13) interacts with UTP. 14–19 (SIGKGI) contributes to the ATP binding site. Y54 lines the L-glutamine pocket. Position 71 (D71) interacts with ATP. Residues D71 and E141 each contribute to the Mg(2+) site. CTP-binding positions include 148-150 (DIE), 188-193 (KTKPTQ), and K224. UTP-binding positions include 188 to 193 (KTKPTQ) and K224. The region spanning 292-535 (KIALVGKYVA…IDAANQTGKV (244 aa)) is the Glutamine amidotransferase type-1 domain. G354 is an L-glutamine binding site. The Nucleophile; for glutamine hydrolysis role is filled by C381. L-glutamine-binding positions include 382-385 (LGMQ), E405, and R463. Active-site residues include H508 and E510.

It belongs to the CTP synthase family. Homotetramer.

It carries out the reaction UTP + L-glutamine + ATP + H2O = CTP + L-glutamate + ADP + phosphate + 2 H(+). The enzyme catalyses L-glutamine + H2O = L-glutamate + NH4(+). The catalysed reaction is UTP + NH4(+) + ATP = CTP + ADP + phosphate + 2 H(+). The protein operates within pyrimidine metabolism; CTP biosynthesis via de novo pathway; CTP from UDP: step 2/2. Its activity is regulated as follows. Allosterically activated by GTP, when glutamine is the substrate; GTP has no effect on the reaction when ammonia is the substrate. The allosteric effector GTP functions by stabilizing the protein conformation that binds the tetrahedral intermediate(s) formed during glutamine hydrolysis. Inhibited by the product CTP, via allosteric rather than competitive inhibition. Functionally, catalyzes the ATP-dependent amination of UTP to CTP with either L-glutamine or ammonia as the source of nitrogen. Regulates intracellular CTP levels through interactions with the four ribonucleotide triphosphates. This is CTP synthase from Lactiplantibacillus plantarum (strain ATCC BAA-793 / NCIMB 8826 / WCFS1) (Lactobacillus plantarum).